Consider the following 212-residue polypeptide: Thymidylate kinase (212 aa).

15–22 (GIDGAGKS) is an ATP binding site.

It belongs to the thymidylate kinase family.

The enzyme catalyses dTMP + ATP = dTDP + ADP. Its function is as follows. Phosphorylation of dTMP to form dTDP in both de novo and salvage pathways of dTTP synthesis. This is Thymidylate kinase from Chromobacterium violaceum (strain ATCC 12472 / DSM 30191 / JCM 1249 / CCUG 213 / NBRC 12614 / NCIMB 9131 / NCTC 9757 / MK).